The following is a 231-amino-acid chain: tRNA (guanine-N(1)-)-methyltransferase (231 aa).

S-adenosyl-L-methionine is bound by residues Gly114 and 134–139; that span reads IGDYVL.

Belongs to the RNA methyltransferase TrmD family. In terms of assembly, homodimer.

Its subcellular location is the cytoplasm. It catalyses the reaction guanosine(37) in tRNA + S-adenosyl-L-methionine = N(1)-methylguanosine(37) in tRNA + S-adenosyl-L-homocysteine + H(+). Its function is as follows. Specifically methylates guanosine-37 in various tRNAs. In Clostridioides difficile (strain 630) (Peptoclostridium difficile), this protein is tRNA (guanine-N(1)-)-methyltransferase.